We begin with the raw amino-acid sequence, 317 residues long: UV DNA damage endonuclease (317 aa).

It belongs to the uve1/UvsE family.

Functionally, component in a DNA repair pathway. Removal of UV LIGHT damaged nucleotides. Recognizes pyrimidine dimers and cleave a phosphodiester bond immediately 5' to the lesion. The sequence is that of UV DNA damage endonuclease from Bacillus cereus (strain G9842).